A 424-amino-acid polypeptide reads, in one-letter code: Insertion element IS2A uncharacterized 48.2 kDa protein (424 aa).

In terms of domain architecture, Integrase catalytic spans 229–412 (KPAVPPSKRA…SPREYLRHGA (184 aa)).

The protein belongs to the transposase 8 family.

The protein is Insertion element IS2A uncharacterized 48.2 kDa protein of Escherichia coli.